A 453-amino-acid chain; its full sequence is UDP-glycosyltransferase 79B6 (453 aa).

UDP-alpha-D-glucose contacts are provided by residues serine 266, 325–327 (VQQ), 342–350 (HCGFGSMWE), and 364–367 (LGEQ).

This sequence belongs to the UDP-glycosyltransferase family.

This is UDP-glycosyltransferase 79B6 (UGT79B6) from Arabidopsis thaliana (Mouse-ear cress).